A 342-amino-acid polypeptide reads, in one-letter code: Platelet-activating factor receptor (342 aa).

At 1 to 16 (MELNSSSRVDSEFRYT) the chain is on the extracellular side. Asn4 carries an N-linked (GlcNAc...) asparagine glycan. A helical transmembrane segment spans residues 17-38 (LFPIVYSIIFVLGIIANGYVLW). Residues 39–54 (VFARLYPSKKLNEIKI) are Cytoplasmic-facing. Residues 55–74 (FMVNLTVADLLFLITLPLWI) traverse the membrane as a helical segment. Over 75–91 (VYYSNQGNWFLPKFLCN) the chain is Extracellular. Cys90 and Cys173 are oxidised to a cystine. A helical transmembrane segment spans residues 92–113 (LAGCLFFINTYCSVAFLGVITY). Over 114–133 (NRFQAVKYPIKTAQATTRKR) the chain is Cytoplasmic. A helical transmembrane segment spans residues 134-155 (GIALSLVIWVAIVAAASYFLVM). The Extracellular portion of the chain corresponds to 156–184 (DSTNVVSNKAGSGNITRCFEHYEKGSKPV). Asn169 carries an N-linked (GlcNAc...) asparagine glycan. A helical transmembrane segment spans residues 185 to 205 (LIIHICIVLGFFIVFLLILFC). Topologically, residues 206 to 233 (NLVIIHTLLRQPVKQQRNAEVRRRALWM) are cytoplasmic. A helical transmembrane segment spans residues 234-254 (VCTVLAVFVICFVPHHMVQLP). At 255–276 (WTLAELGMWPSSNHQAINDAHQ) the chain is on the extracellular side. A helical transmembrane segment spans residues 277–296 (VTLCLLSTNCVLDPVIYCFL). The Cytoplasmic portion of the chain corresponds to 297-342 (TKKFRKHLSEKLNIMRSSQKCSRVTTDTGTEMAIPINHTPVNPIKN).

The protein belongs to the G-protein coupled receptor 1 family. As to quaternary structure, interacts with ARRB1.

It is found in the cell membrane. In terms of biological role, receptor for platelet activating factor, a chemotactic phospholipid mediator that possesses potent inflammatory, smooth-muscle contractile and hypotensive activity. Seems to mediate its action via a G protein that activates a phosphatidylinositol-calcium second messenger system. This Cavia porcellus (Guinea pig) protein is Platelet-activating factor receptor (PTAFR).